Here is a 147-residue protein sequence, read N- to C-terminus: Hemoglobin subunit beta (147 aa).

Position 2 is an N-acetylvaline (Val-2). The Globin domain maps to 3–147; that stretch reads NLSGDEKNAV…VANALAHRYH (145 aa). At Ser-45 the chain carries Phosphoserine. Lys-60 carries the N6-acetyllysine modification. Residue His-64 participates in heme b binding. An N6-acetyllysine modification is found at Lys-83. His-93 is a binding site for heme b. Cys-94 is subject to S-nitrosocysteine.

It belongs to the globin family. In terms of assembly, heterotetramer of two alpha chains and two beta chains. As to expression, red blood cells.

Involved in oxygen transport from the lung to the various peripheral tissues. This chain is Hemoglobin subunit beta (HBB), found in Vicugna pacos (Alpaca).